The chain runs to 222 residues: Eukaryotic translation initiation factor 4E-2 (222 aa).

Residues 1 to 20 (MVDEVEKPVSLEESKTNTRE) are compositionally biased toward basic and acidic residues. A disordered region spans residues 1-35 (MVDEVEKPVSLEESKTNTREVEEEGEIVGESDDTM). The segment covering 21–33 (VEEEGEIVGESDD) has biased composition (acidic residues). EIF4G-binding regions lie at residues 47–50 (HALE) and 57–93 (FDNP…NNIH). MRNA is bound by residues 65–70 (KQAAWG), Lys-97, and 115–116 (WE). A disulfide bridge links Cys-120 with Cys-158. Residues 141–150 (YTLLAMIGEQ) form an EIF4G-binding region. Residues 165–170 (RVRQEK) and 210–214 (KKLDR) each bind mRNA.

This sequence belongs to the eukaryotic initiation factor 4E family. EIF4F is a multi-subunit complex, the composition of which varies with external and internal environmental conditions. It is composed of at least EIF4A, EIF4E and EIF4G. EIF4E is also known to interact with other partners. In higher plants two isoforms of EIF4F have been identified, named isoform EIF4F and isoform EIF(iso)4F. Isoform EIF4F has subunits p220 and p26, whereas isoform EIF(iso)4F has subunits p82 and p28. As to quaternary structure, (Microbial infection) Interacts with potyvirus viral genome-linked protein (VPg); this interaction is possible in susceptible hosts but impaired in resistant plants. According to the redox status, the Cys-120-Cys-158 disulfide bridge may have a role in regulating protein function by affecting its ability to bind capped mRNA. In terms of tissue distribution, strongly expressed in susceptible plants but not in resistant ones.

It localises to the nucleus. It is found in the cytoplasm. Component of the protein complex eIF4F, which is involved in the recognition of the mRNA cap, ATP-dependent unwinding of 5'-terminal secondary structure and recruitment of mRNA to the ribosome. Recognizes and binds the 7-methylguanosine-containing mRNA cap during an early step in the initiation of protein synthesis and facilitates ribosome binding by inducing the unwinding of the mRNAs secondary structures. Key component of recessive resistance to potyviruses. Its function is as follows. (Microbial infection) Susceptibility host factor required for viral infection (e.g. potato virus Y (PVY) and pepper mottle virus (PepMoV)) by recruiting viral RNAs to the host ribosomal complex via an interaction with viral genome-linked protein (VPg). The chain is Eukaryotic translation initiation factor 4E-2 from Nicotiana tabacum (Common tobacco).